The sequence spans 462 residues: Trigger factor (462 aa).

Residues 163 to 248 (GDEVLFDFKG…LKEVRRVNSL (86 aa)) enclose the PPIase FKBP-type domain. A disordered region spans residues 442–462 (SMQEKQTQEPAEEKVETKEEK). A compositionally biased stretch (basic and acidic residues) spans 452–462 (AEEKVETKEEK).

The protein belongs to the FKBP-type PPIase family. Tig subfamily.

It localises to the cytoplasm. It carries out the reaction [protein]-peptidylproline (omega=180) = [protein]-peptidylproline (omega=0). Its function is as follows. Involved in protein export. Acts as a chaperone by maintaining the newly synthesized protein in an open conformation. Functions as a peptidyl-prolyl cis-trans isomerase. The polypeptide is Trigger factor (Mycoplasmopsis synoviae (strain 53) (Mycoplasma synoviae)).